The primary structure comprises 608 residues: Isoprene synthase, chloroplastic (608 aa).

The transit peptide at 1–45 (MATNLLCLSNKLSSPTPTPSTRFPQSKNFITQKTSLANPKPWRVI) directs the protein to the chloroplast. D350 provides a ligand contact to dimethylallyl diphosphate. D350 and D354 together coordinate Mg(2+). The DDXXD motif motif lies at 350 to 354 (DDVYD). Residues E428, R494, and N497 each coordinate dimethylallyl diphosphate. The Mg(2+) site is built by N497, T501, and E505.

The protein belongs to the terpene synthase family. Tpsb subfamily. Mg(2+) serves as cofactor. It depends on Mn(2+) as a cofactor.

It localises to the plastid. The protein resides in the chloroplast. The catalysed reaction is dimethylallyl diphosphate = isoprene + diphosphate. Functionally, lyase that catalyzes the formation of isoprene from dimethylallyl diphosphate. The chain is Isoprene synthase, chloroplastic (ISPS) from Pueraria montana var. lobata (Kudzu vine).